Consider the following 236-residue polypeptide: ATP synthase subunit a, chloroplastic (236 aa).

5 helical membrane-spanning segments follow: residues 25 to 45 (MHGQVLINSWIVLGLIIAFAV), 87 to 107 (FIGTLFLFIFVSNWSGALIPW), 123 to 143 (DINTTVALALLTSLTYFYAGL), 180 to 202 (LFGNILADELVVAVLVSLVPLVI), and 210 to 230 (GLFTSGIQALIFATLAGAYIG).

This sequence belongs to the ATPase A chain family. In terms of assembly, F-type ATPases have 2 components, CF(1) - the catalytic core - and CF(0) - the membrane proton channel. CF(1) has five subunits: alpha(3), beta(3), gamma(1), delta(1), epsilon(1). CF(0) has four main subunits: a, b, b' and c.

The protein resides in the plastid. The protein localises to the chloroplast thylakoid membrane. Key component of the proton channel; it plays a direct role in the translocation of protons across the membrane. This is ATP synthase subunit a, chloroplastic from Ostreococcus tauri.